The primary structure comprises 538 residues: Serine/threonine-protein phosphatase 5 (538 aa).

TPR repeat units lie at residues 13-46, 48-80, and 81-114; these read AEEFKSQANEAFKGHKYSSAIDLYTKAIELNSNN, VYWANRAFAHTKLEEYGSAIQDASKAIEVDSRY, and SKGYYRRGAAYLAMGKFKDALKDFQQVKRLSPND. 2 helical membrane-spanning segments follow: residues 163–183 and 185–205; these read SSMPTKTALAAVVAAVMVVAV and GFATTEILMVLVSVVLGTFWW. Positions 282, 284, 311, and 343 each coordinate Mn(2+). Catalysis depends on His344, which acts as the Proton donor. 2 residues coordinate Mn(2+): His392 and His467.

This sequence belongs to the PPP phosphatase family. PP-5 (PP-T) subfamily. As to quaternary structure, interacts with PHYA and PHYB, mostly when they are phosphorylated and in Pfr forms. Mn(2+) serves as cofactor.

The protein localises to the endoplasmic reticulum membrane. Its subcellular location is the nucleus membrane. It is found in the cytoplasm. The protein resides in the nucleus. It localises to the nucleoplasm. The protein localises to the nucleus speckle. It catalyses the reaction O-phospho-L-seryl-[protein] + H2O = L-seryl-[protein] + phosphate. The enzyme catalyses O-phospho-L-threonyl-[protein] + H2O = L-threonyl-[protein] + phosphate. With respect to regulation, activated by arachidonic acid (AA). Functionally, isoform 2 dephosphorylates phosphorylated phytochromes, with a preference toward Pfr forms, and enhances phytochrome-mediated photoresponses, probably by enhancing their stability and their binding affinity for light signal transducers such as NDPK2. Can use para-nitrophenylphosphate (pNPP) as substrate. This is Serine/threonine-protein phosphatase 5 (PAPP5) from Arabidopsis thaliana (Mouse-ear cress).